The chain runs to 977 residues: Alanine--tRNA ligase (977 aa).

Residues Ser512–Ser535 are disordered. 4 residues coordinate Zn(2+): His618, His622, Cys720, and His724.

This sequence belongs to the class-II aminoacyl-tRNA synthetase family. The cofactor is Zn(2+).

It is found in the cytoplasm. It catalyses the reaction tRNA(Ala) + L-alanine + ATP = L-alanyl-tRNA(Ala) + AMP + diphosphate. Catalyzes the attachment of alanine to tRNA(Ala) in a two-step reaction: alanine is first activated by ATP to form Ala-AMP and then transferred to the acceptor end of tRNA(Ala). Also edits incorrectly charged Ser-tRNA(Ala) and Gly-tRNA(Ala) via its editing domain. This chain is Alanine--tRNA ligase, found in Leptospira interrogans serogroup Icterohaemorrhagiae serovar Lai (strain 56601).